A 441-amino-acid polypeptide reads, in one-letter code: MKERSTELVQGFRHSVPYINAHRGKTFVIMLGGEAIEHANFSSIVNDIGLLHSLGIKLVVVYGARPQIDANLTTHHYEPHYHKNTRITDSATLELVKQAAGMLQLDITARLSMSLNNTPLQGAHINVVSGNFIIAQPLGVDDGVDYCHSGRIRRIDEEAVHRQLNSGAIVLLGPVAVSVTGESFNLTSEEVATQLAIKLKAEKMIGFCSSQGVTNEEGRIISELFPDDAQQRIDVLEQAGDYHSGTVRFLRGAVKACRSGVRRSHLISYQDDGALLQELFSRDGIGTQIVMESAEQVRRATINDIGGILELIRPLEEQGILVRRSREQLEMEIDKFTVVVRDNLTIACAALYPFPEESIGEMACVAVHPDYRSSSRGDMLLMRVAAQARQQGLQKLFVLTTHSIHWFQERGFLPAEVEMLPKKKQALYNYQRRSKILVLDL.

The N-acetyltransferase domain occupies 295 to 434 (EQVRRATIND…QALYNYQRRS (140 aa)).

The protein belongs to the acetyltransferase family. ArgA subfamily. In terms of assembly, homohexamer.

It is found in the cytoplasm. It carries out the reaction L-glutamate + acetyl-CoA = N-acetyl-L-glutamate + CoA + H(+). The protein operates within amino-acid biosynthesis; L-arginine biosynthesis; N(2)-acetyl-L-ornithine from L-glutamate: step 1/4. The sequence is that of Amino-acid acetyltransferase from Pectobacterium atrosepticum (strain SCRI 1043 / ATCC BAA-672) (Erwinia carotovora subsp. atroseptica).